A 246-amino-acid polypeptide reads, in one-letter code: Chloroplastic group IIB intron splicing facilitator CRS2-A, chloroplastic (246 aa).

The N-terminal 34 residues, methionine 1–arginine 34, are a transit peptide targeting the chloroplast. Position 64 (tyrosine 64) interacts with tRNA. Histidine 69 functions as the Proton acceptor in the catalytic mechanism. Residues tyrosine 114, asparagine 116, and asparagine 162 each contribute to the tRNA site.

It belongs to the PTH family. CRS2 subfamily. Part of large ribonucleo-protein complexes that include group IIB introns and either CAF1 or CAF2.

The protein resides in the plastid. The protein localises to the chloroplast stroma. Its function is as follows. Required for the splicing of group IIB introns in chloroplasts. In Arabidopsis thaliana (Mouse-ear cress), this protein is Chloroplastic group IIB intron splicing facilitator CRS2-A, chloroplastic (CRS2A).